We begin with the raw amino-acid sequence, 506 residues long: Cobyric acid synthase (506 aa).

A GATase cobBQ-type domain is found at 251–448 (DITIAIVQLP…LHGLFDSDAF (198 aa)). Cys332 (nucleophile) is an active-site residue. His440 is an active-site residue.

This sequence belongs to the CobB/CobQ family. CobQ subfamily.

The protein operates within cofactor biosynthesis; adenosylcobalamin biosynthesis. Its function is as follows. Catalyzes amidations at positions B, D, E, and G on adenosylcobyrinic A,C-diamide. NH(2) groups are provided by glutamine, and one molecule of ATP is hydrogenolyzed for each amidation. This Salmonella agona (strain SL483) protein is Cobyric acid synthase.